Here is a 361-residue protein sequence, read N- to C-terminus: Blue-sensitive opsin (361 aa).

Over 1–43 (MHPPRPTTDLPEDFYIPMALDAPNITALSPFLVPQTHLGSPGL) the chain is Extracellular. A glycan (N-linked (GlcNAc...) asparagine) is linked at Asn-24. Residues 44 to 68 (FRAMAAFMFLLIALGVPINTLTIFC) form a helical membrane-spanning segment. At 69–80 (TARFRKLRSHLN) the chain is on the cytoplasmic side. The chain crosses the membrane as a helical span at residues 81–106 (YILVNLALANLLVILVGSTTACYSFS). Residues 107 to 120 (QMYFALGPTACKIE) are Extracellular-facing. Cys-117 and Cys-194 form a disulfide bridge. The helical transmembrane segment at 121–140 (GFAATLGGMVSLWSLAVVAF) threads the bilayer. Residues 141-159 (ERFLVICKPLGNFTFRGSH) are Cytoplasmic-facing. A helical transmembrane segment spans residues 160-183 (AVLGCVATWVLGFVASAPPLFGWS). Residues 184–209 (RYIPEGLQCSCGPDWYTTDNKWHNES) lie on the Extracellular side of the membrane. A helical transmembrane segment spans residues 210–237 (YVLFLFTFCFGVPLAIIVFSYGRLLITL). Topologically, residues 238–259 (RAVARQQEQSATTQKADREVTK) are cytoplasmic. The chain crosses the membrane as a helical span at residues 260–283 (MVVVMVLGFLVCWAPYTAFALWVV). The Extracellular segment spans residues 284 to 291 (THRGRSFE). Residues 292 to 316 (VGLASIPSVFSKSSTVYNPVIYVLM) traverse the membrane as a helical segment. Residue Lys-303 is modified to N6-(retinylidene)lysine. Over 317 to 361 (NKQFRSCMLKLLFCGRSPFGDDEDVSGSSQATQVSSVSSSHVAPA) the chain is Cytoplasmic. A disordered region spans residues 338–361 (DEDVSGSSQATQVSSVSSSHVAPA). Low complexity predominate over residues 342 to 361 (SGSSQATQVSSVSSSHVAPA).

Belongs to the G-protein coupled receptor 1 family. Opsin subfamily. Post-translationally, phosphorylated on some or all of the serine and threonine residues present in the C-terminal region. As to expression, the color pigments are found in the cone photoreceptor cells.

It is found in the membrane. Functionally, visual pigments are the light-absorbing molecules that mediate vision. They consist of an apoprotein, opsin, covalently linked to cis-retinal. The chain is Blue-sensitive opsin from Gallus gallus (Chicken).